Here is a 142-residue protein sequence, read N- to C-terminus: Large ribosomal subunit protein uL13 (142 aa).

Belongs to the universal ribosomal protein uL13 family. In terms of assembly, part of the 50S ribosomal subunit.

In terms of biological role, this protein is one of the early assembly proteins of the 50S ribosomal subunit, although it is not seen to bind rRNA by itself. It is important during the early stages of 50S assembly. The chain is Large ribosomal subunit protein uL13 from Azotobacter vinelandii (strain DJ / ATCC BAA-1303).